An 865-amino-acid polypeptide reads, in one-letter code: cGMP-specific 3',5'-cyclic phosphodiesterase (865 aa).

Ser-92 bears the Phosphoserine mark. 2 consecutive GAF domains span residues 154 to 304 (DVTA…GIVL) and 336 to 493 (SLEV…GLGI). Positions 526–850 (ETRELQALSA…QKWQALAEQQ (325 aa)) constitute a PDEase domain. His-603 serves as the catalytic Proton donor. 4 residues coordinate Zn(2+): His-607, His-643, Asp-644, and Asp-754. Asp-644 is a binding site for Mg(2+). Gln-807 is a 3',5'-cyclic GMP binding site.

It belongs to the cyclic nucleotide phosphodiesterase family. The cofactor is Zn(2+). Mg(2+) is required as a cofactor. Post-translationally, phosphorylation is regulated by binding of cGMP to the two allosteric sites. Phosphorylation by PRKG1 leads to its activation.

The catalysed reaction is 3',5'-cyclic GMP + H2O = GMP + H(+). It participates in purine metabolism; 3',5'-cyclic GMP degradation; GMP from 3',5'-cyclic GMP: step 1/1. In terms of biological role, plays a role in signal transduction by regulating the intracellular concentration of cyclic nucleotides. This phosphodiesterase catalyzes the specific hydrolysis of cGMP to 5'-GMP. Specifically regulates nitric-oxide-generated cGMP. This chain is cGMP-specific 3',5'-cyclic phosphodiesterase (Pde5a), found in Mus musculus (Mouse).